A 365-amino-acid chain; its full sequence is MSGSTFGNLFAVTNFGESHGPAIGCVIDGCPPGLALTEADIQTDLDRRRPGTSRHVTQRNEPDAVEILSGVYEGKTTGTPICLLIRNTDQRSKDYGNILETFRPGHADYSYLHKYGRRDPRGGGRASARLTAPMVAAGAVAKKWLAEKYGTSFRGCMAQIGDIAIPFESWEHVPRNPFFAPVADVSHLEDYMDALRKAGDSCGARIRVTASGVPVGLGEPLFDKLDADIAFAMMGINAVKGVEIGAGFASVTQRGTTHGDSLSPEGFLSNNAGGVLGGISTGQDLEVSIAIKPTSSIITPRQSIDTAGNPAEVVTKGRHDPCVGIRATPIAEAMLALVVMEHALRQRAQNADVTVSTPDIMRARG.

NADP(+) is bound by residues arginine 48 and arginine 54. FMN is bound by residues arginine 125–serine 127, asparagine 237–alanine 238, glycine 277, lysine 292–serine 296, and arginine 318.

It belongs to the chorismate synthase family. Homotetramer. FMNH2 is required as a cofactor.

It catalyses the reaction 5-O-(1-carboxyvinyl)-3-phosphoshikimate = chorismate + phosphate. It functions in the pathway metabolic intermediate biosynthesis; chorismate biosynthesis; chorismate from D-erythrose 4-phosphate and phosphoenolpyruvate: step 7/7. Its function is as follows. Catalyzes the anti-1,4-elimination of the C-3 phosphate and the C-6 proR hydrogen from 5-enolpyruvylshikimate-3-phosphate (EPSP) to yield chorismate, which is the branch point compound that serves as the starting substrate for the three terminal pathways of aromatic amino acid biosynthesis. This reaction introduces a second double bond into the aromatic ring system. The polypeptide is Chorismate synthase (Polaromonas sp. (strain JS666 / ATCC BAA-500)).